A 243-amino-acid chain; its full sequence is E3 ubiquitin-protein ligase RMA3 (243 aa).

The segment at 44 to 92 (CNICLDTAHDPVVTLCGHLFCWPCIYKWLHVQLSSVSVDQHQNNCPVCK) adopts an RING-type zinc-finger fold. Residues 110-135 (SPSSTFGSKKQDALSTDIPRRPAPSA) form a disordered region. The chain crosses the membrane as a helical; Anchor for type IV membrane protein span at residues 223-243 (KSLNRVSIFFLCCIILCLLLF).

Ubiquitous. Highly expressed in roots.

It localises to the endoplasmic reticulum membrane. The enzyme catalyses S-ubiquitinyl-[E2 ubiquitin-conjugating enzyme]-L-cysteine + [acceptor protein]-L-lysine = [E2 ubiquitin-conjugating enzyme]-L-cysteine + N(6)-ubiquitinyl-[acceptor protein]-L-lysine.. The protein operates within protein modification; protein ubiquitination. In terms of biological role, E3 ubiquitin-protein ligase. The chain is E3 ubiquitin-protein ligase RMA3 (RMA3) from Arabidopsis thaliana (Mouse-ear cress).